A 264-amino-acid polypeptide reads, in one-letter code: MNRTLNREQVLALAEHIENAELQAHDIHKVTNDYPEMTFADAYTIQWEIRRRKEERGNKIVGLKMGLTSWAKMAQMGVETPIYGFLADYFSVPDGGVVDCSKLIHPKIEAEIAVVTKAPLVGPGCHIGDVIAAVDYVIPTVEVIDSRYENFKFDLISVVADNASSTRYITGGRMANLEDVDLRTLGVVMEKNGEVVELGAGAAVLGHPLSSVAMLANLLAERGEHIPAGTFIMTGGITAAVAVAPGDNITVRYQGLGSVSARFV.

The protein belongs to the hydratase/decarboxylase family.

The enzyme catalyses (3E)-2-oxohex-3-enedioate + H(+) = 2-oxopent-4-enoate + CO2. Its pathway is xenobiotic degradation; toluene degradation. This Pseudomonas putida (Arthrobacter siderocapsulatus) protein is 4-oxalocrotonate decarboxylase (xylI).